Reading from the N-terminus, the 145-residue chain is uncharacterized protein (145 aa).

Positions M1 to R41 form a coiled coil. The tract at residues M1–S91 is disordered. A compositionally biased stretch (low complexity) spans Q7 to Q26. Basic and acidic residues predominate over residues S27–S42. The span at P43–T58 shows a compositional bias: low complexity.

This is an uncharacterized protein from Dictyostelium discoideum (Social amoeba).